The primary structure comprises 337 residues: S-adenosylmethionine:tRNA ribosyltransferase-isomerase (337 aa).

The protein belongs to the QueA family. In terms of assembly, monomer.

Its subcellular location is the cytoplasm. It carries out the reaction 7-aminomethyl-7-carbaguanosine(34) in tRNA + S-adenosyl-L-methionine = epoxyqueuosine(34) in tRNA + adenine + L-methionine + 2 H(+). Its pathway is tRNA modification; tRNA-queuosine biosynthesis. Its function is as follows. Transfers and isomerizes the ribose moiety from AdoMet to the 7-aminomethyl group of 7-deazaguanine (preQ1-tRNA) to give epoxyqueuosine (oQ-tRNA). The sequence is that of S-adenosylmethionine:tRNA ribosyltransferase-isomerase from Legionella pneumophila (strain Lens).